The following is a 476-amino-acid chain: Ribosomal protein uS12 methylthiotransferase RimO (476 aa).

The MTTase N-terminal domain occupies 33 to 143; that stretch reads NRIGFVSLGC…VLKHVHKYVP (111 aa). Residues C42, C78, C107, C175, C179, and C182 each contribute to the [4Fe-4S] cluster site. Positions 161–398 constitute a Radical SAM core domain; it reads LTPKHYAYLK…MEVQAEISAE (238 aa). Residues 401–467 form the TRAM domain; that stretch reads ARFVGRTMDI…EHDLWAELVD (67 aa).

This sequence belongs to the methylthiotransferase family. RimO subfamily. The cofactor is [4Fe-4S] cluster.

The protein localises to the cytoplasm. It catalyses the reaction L-aspartate(89)-[ribosomal protein uS12]-hydrogen + (sulfur carrier)-SH + AH2 + 2 S-adenosyl-L-methionine = 3-methylsulfanyl-L-aspartate(89)-[ribosomal protein uS12]-hydrogen + (sulfur carrier)-H + 5'-deoxyadenosine + L-methionine + A + S-adenosyl-L-homocysteine + 2 H(+). In terms of biological role, catalyzes the methylthiolation of an aspartic acid residue of ribosomal protein uS12. The polypeptide is Ribosomal protein uS12 methylthiotransferase RimO (Shewanella sp. (strain MR-4)).